We begin with the raw amino-acid sequence, 93 residues long: Large ribosomal subunit protein bL31B (93 aa).

It belongs to the bacterial ribosomal protein bL31 family. Type B subfamily. Part of the 50S ribosomal subunit.

This Psychrobacter arcticus (strain DSM 17307 / VKM B-2377 / 273-4) protein is Large ribosomal subunit protein bL31B.